The sequence spans 371 residues: Forkhead box protein E1 (371 aa).

Residues 21–53 form a disordered region; the sequence is EERGEAAAAGAGVPAEAAGRGAGGRRRKRPLQR. A compositionally biased stretch (low complexity) spans 26–39; the sequence is AAAAGAGVPAEAAG. Residues 43–52 are compositionally biased toward basic residues; sequence GGRRRKRPLQ. Residues 55–149 constitute a DNA-binding region (fork-head); sequence KPPYSYIALI…ESGSFLRRRK (95 aa).

Post-translationally, phosphorylated. Expressed in Rathke pouch, in thyroid, and in the epithelium of the pharyngeal wall and arches, whereas it is absent in the epithelium of the pharyngeal pouches.

It localises to the nucleus. Transcription factor that binds consensus sites on a variety of gene promoters and activate their transcription. Involved in proper palate formation, most probably through the expression of MSX1 and TGFB3 genes which are direct targets of this transcription factor. Also implicated in thyroid gland morphogenesis. May indirectly play a role in cell growth and migration through the regulation of WNT5A expression. The polypeptide is Forkhead box protein E1 (Foxe1) (Mus musculus (Mouse)).